Reading from the N-terminus, the 101-residue chain is Small ribosomal subunit protein uS14 (101 aa).

Belongs to the universal ribosomal protein uS14 family. In terms of assembly, part of the 30S ribosomal subunit. Contacts proteins S3 and S10.

Binds 16S rRNA, required for the assembly of 30S particles and may also be responsible for determining the conformation of the 16S rRNA at the A site. The sequence is that of Small ribosomal subunit protein uS14 from Burkholderia ambifaria (strain MC40-6).